The chain runs to 182 residues: Putative adenylate kinase (182 aa).

Residues glycine 10, glycine 12, lysine 13, threonine 14, and serine 15 each contribute to the ATP site. The tract at residues 30–53 (HLNEMIKEEHLYTEVDEVRDAVIA) is NMP. The interval 104–114 (ARGYSEEKIRE) is LID. Positions 105 and 143 each coordinate ATP.

This sequence belongs to the adenylate kinase family. AK6 subfamily. Interacts with uS11. Not a structural component of 40S pre-ribosomes, but transiently interacts with them by binding to uS11.

The catalysed reaction is AMP + ATP = 2 ADP. It carries out the reaction ATP + H2O = ADP + phosphate + H(+). In terms of biological role, broad-specificity nucleoside monophosphate (NMP) kinase that catalyzes the reversible transfer of the terminal phosphate group between nucleoside triphosphates and monophosphates. Also has ATPase activity. Involved in the late maturation steps of the 30S ribosomal particles, specifically 16S rRNA maturation. While NMP activity is not required for ribosome maturation, ATPase activity is. Associates transiently with small ribosomal subunit protein uS11. ATP hydrolysis breaks the interaction with uS11. May temporarily remove uS11 from the ribosome to enable a conformational change of the ribosomal RNA that is needed for the final maturation step of the small ribosomal subunit. This chain is Putative adenylate kinase, found in Methanosarcina barkeri (strain Fusaro / DSM 804).